The sequence spans 273 residues: Mitochondrial distribution and morphology protein 12 (273 aa).

One can recognise an SMP-LTD domain in the interval 1 to 260 (MSFDINWEQL…WPSWINFDFY (260 aa)). The tract at residues 76–98 (MSAEEETEGSDDEGYGGDRVRNR) is disordered. A compositionally biased stretch (acidic residues) spans 78–90 (AEEETEGSDDEGY).

Belongs to the MDM12 family. In terms of assembly, component of the ER-mitochondria encounter structure (ERMES) or MDM complex, composed of MMM1, MDM10, MDM12 and MDM34. An MMM1 homodimer associates with one molecule of MDM12 on each side in a pairwise head-to-tail manner, and the SMP-LTD domains of MMM1 and MDM12 generate a continuous hydrophobic tunnel for phospholipid trafficking.

It is found in the mitochondrion outer membrane. Its subcellular location is the endoplasmic reticulum membrane. In terms of biological role, component of the ERMES/MDM complex, which serves as a molecular tether to connect the endoplasmic reticulum (ER) and mitochondria. Components of this complex are involved in the control of mitochondrial shape and protein biogenesis, and function in nonvesicular lipid trafficking between the ER and mitochondria. MDM12 is required for the interaction of the ER-resident membrane protein MMM1 and the outer mitochondrial membrane-resident beta-barrel protein MDM10. The MDM12-MMM1 subcomplex functions in the major beta-barrel assembly pathway that is responsible for biogenesis of all mitochondrial outer membrane beta-barrel proteins, and acts in a late step after the SAM complex. The MDM10-MDM12-MMM1 subcomplex further acts in the TOM40-specific pathway after the action of the MDM12-MMM1 complex. Essential for establishing and maintaining the structure of mitochondria and maintenance of mtDNA nucleoids. The protein is Mitochondrial distribution and morphology protein 12 of Vanderwaltozyma polyspora (strain ATCC 22028 / DSM 70294 / BCRC 21397 / CBS 2163 / NBRC 10782 / NRRL Y-8283 / UCD 57-17) (Kluyveromyces polysporus).